Reading from the N-terminus, the 329-residue chain is Alpha/beta hydrolase domain-containing protein 17C (329 aa).

The segment covering 53–79 (GASAPAPAQATAAAAAAQPAPQQPEEG) has biased composition (low complexity). Residues 53-85 (GASAPAPAQATAAAAAAQPAPQQPEEGAGAGPG) form a disordered region. Residues Ser-211, Asp-276, and His-305 each act as charge relay system in the active site.

Belongs to the AB hydrolase superfamily. ABHD17 family. Palmitoylated on cysteine residues located in a cysteine cluster at the N-terminus which promotes membrane localization. Palmitoylation is required for post-synaptic localization and for depalmitoylating activity towards DLG4/PSD95.

The protein resides in the recycling endosome membrane. The protein localises to the cell projection. It is found in the dendritic spine. It localises to the postsynaptic density membrane. The enzyme catalyses S-hexadecanoyl-L-cysteinyl-[protein] + H2O = L-cysteinyl-[protein] + hexadecanoate + H(+). With respect to regulation, inhibited by palmostatin-B. Its function is as follows. Hydrolyzes fatty acids from S-acylated cysteine residues in proteins. Has depalmitoylating activity towards NRAS and DLG4/PSD95. In Homo sapiens (Human), this protein is Alpha/beta hydrolase domain-containing protein 17C.